The following is a 586-amino-acid chain: Exopolysaccharide phosphotransferase SCO6023 (586 aa).

Belongs to the stealth family.

The polypeptide is Exopolysaccharide phosphotransferase SCO6023 (Streptomyces coelicolor (strain ATCC BAA-471 / A3(2) / M145)).